The following is a 198-amino-acid chain: Nucleoid occlusion factor SlmA (198 aa).

Residues 10–70 (NRREEILQSL…SLIEFIEDSL (61 aa)) enclose the HTH tetR-type domain. The H-T-H motif DNA-binding region spans 33–52 (TTAKLAASVGVSEAALYRHF). The stretch at 117-144 (EQDRLQGRINQLFERIEAQLRQVLREKR) forms a coiled coil.

This sequence belongs to the nucleoid occlusion factor SlmA family. As to quaternary structure, homodimer. Interacts with FtsZ.

It is found in the cytoplasm. It localises to the nucleoid. Required for nucleoid occlusion (NO) phenomenon, which prevents Z-ring formation and cell division over the nucleoid. Acts as a DNA-associated cell division inhibitor that binds simultaneously chromosomal DNA and FtsZ, and disrupts the assembly of FtsZ polymers. SlmA-DNA-binding sequences (SBS) are dispersed on non-Ter regions of the chromosome, preventing FtsZ polymerization at these regions. In Escherichia coli O127:H6 (strain E2348/69 / EPEC), this protein is Nucleoid occlusion factor SlmA.